The primary structure comprises 519 residues: Histidine ammonia-lyase (519 aa).

The 5-imidazolinone (Ala-Gly) cross-link spans Ala-146–Gly-148. Position 147 is a 2,3-didehydroalanine (Ser) (Ser-147).

This sequence belongs to the PAL/histidase family. In terms of processing, contains an active site 4-methylidene-imidazol-5-one (MIO), which is formed autocatalytically by cyclization and dehydration of residues Ala-Ser-Gly.

It localises to the cytoplasm. The enzyme catalyses L-histidine = trans-urocanate + NH4(+). It functions in the pathway amino-acid degradation; L-histidine degradation into L-glutamate; N-formimidoyl-L-glutamate from L-histidine: step 1/3. The sequence is that of Histidine ammonia-lyase from Psychrobacter sp. (strain PRwf-1).